The following is a 1084-amino-acid chain: Myosin heavy chain, skeletal muscle (1084 aa).

3 disordered regions span residues 1–20 (SAET…KTKE), 270–292 (EIEA…SREL), and 298–317 (RLEE…KKRE). The alpha-helical tailpiece (S2) stretch occupies residues 1 to 258 (SAETEKEMAN…SKIEDEQALM (258 aa)). Positions 259 to 1084 (TNLQRIEELE…DVHSKVISEE (826 aa)) are rodlike tail (S2 and LMM domains). The span at 273–292 (AERASRAKAEKQRSDLSREL) shows a compositional bias: basic and acidic residues. A coiled-coil region spans residues 455–1084 (QAFTQQIEGL…DVHSKVISEE (630 aa)).

As to quaternary structure, muscle myosin is a hexameric protein that consists of 2 heavy chain subunits (MHC), 2 alkali light chain subunits (MLC) and 2 regulatory light chain subunits (MLC-2).

It localises to the cytoplasm. Its subcellular location is the myofibril. Its function is as follows. Muscle contraction. The protein is Myosin heavy chain, skeletal muscle of Oryctolagus cuniculus (Rabbit).